The primary structure comprises 764 residues: Calpain-like protease palB/RIM13 (764 aa).

A Calpain catalytic domain is found at 95–368 (GEFYPPLTVY…FKYFYINWNP (274 aa)). Catalysis depends on residues C165, H318, and N336.

This sequence belongs to the peptidase C2 family. PalB/RIM13 subfamily.

In terms of biological role, required for the proteolytic cleavage of the transcription factor RIM101 in response to alkaline ambient pH. This is Calpain-like protease palB/RIM13 from Debaryomyces hansenii (strain ATCC 36239 / CBS 767 / BCRC 21394 / JCM 1990 / NBRC 0083 / IGC 2968) (Yeast).